The primary structure comprises 551 residues: HTH-type transcriptional regulator SgrR (551 aa).

The HTH marR-type domain maps to 1–116 (MPSARLQQQF…LVSHLGRSFR (116 aa)). Positions 26-49 (LNELAALLSCSRRHMRTLLNTMQD) form a DNA-binding region, H-T-H motif. The interval 163 to 492 (ELEADIAHHW…IDWQADAARW (330 aa)) is solute-binding.

Its function is as follows. Activates the small RNA gene sgrS under glucose-phosphate stress conditions as well as yfdZ. Represses its own transcription under both stress and non-stress conditions. Might act as a sensor of the intracellular accumulation of phosphoglucose by binding these molecules in its C-terminal solute-binding domain. This Shigella flexneri serotype 5b (strain 8401) protein is HTH-type transcriptional regulator SgrR.